The chain runs to 65 residues: Large ribosomal subunit protein uL29 (65 aa).

This sequence belongs to the universal ribosomal protein uL29 family.

The polypeptide is Large ribosomal subunit protein uL29 (Mycoplasmopsis synoviae (strain 53) (Mycoplasma synoviae)).